The chain runs to 351 residues: Histidinol-phosphate aminotransferase (351 aa).

Residue lysine 213 is modified to N6-(pyridoxal phosphate)lysine.

This sequence belongs to the class-II pyridoxal-phosphate-dependent aminotransferase family. Histidinol-phosphate aminotransferase subfamily. As to quaternary structure, homodimer. It depends on pyridoxal 5'-phosphate as a cofactor.

The catalysed reaction is L-histidinol phosphate + 2-oxoglutarate = 3-(imidazol-4-yl)-2-oxopropyl phosphate + L-glutamate. It carries out the reaction L-histidine + 2-oxoglutarate = 3-(imidazol-5-yl)pyruvate + L-glutamate. Its pathway is amino-acid biosynthesis; L-histidine biosynthesis; L-histidine from 5-phospho-alpha-D-ribose 1-diphosphate: step 7/9. This Caldanaerobacter subterraneus subsp. tengcongensis (strain DSM 15242 / JCM 11007 / NBRC 100824 / MB4) (Thermoanaerobacter tengcongensis) protein is Histidinol-phosphate aminotransferase.